The following is a 586-amino-acid chain: Monoterpene synthase TPS4, chloroplastic (586 aa).

Residues 1–47 constitute a chloroplast transit peptide; sequence MAATRNLSLLAQSSQPWAGIYGSHGSPRPISSWLRRQSIAKTSYICM. Mg(2+) is bound by residues Asp-340, Asp-344, Asp-485, Thr-489, and Glu-493. A DDXXD motif motif is present at residues 340-344; sequence DDIFD.

Belongs to the terpene synthase family. Tpsg subfamily. As to quaternary structure, monomer. The cofactor is Mg(2+).

It is found in the plastid. It localises to the chloroplast. The enzyme catalyses (2E)-geranyl diphosphate + H2O = (2E)-geraniol + diphosphate. The protein operates within secondary metabolite biosynthesis; terpenoid biosynthesis. Monoterpene synthase involved in the biosynthesis of volatile organic compounds. Mediates the conversion of (2E)-geranyl diphosphate (GPP) into the acyclic monoterpene, geraniol. Does not use (2E,6E)-farnesyl diphosphate (FPP) as substrate. In Cananga odorata (Ylang-ylang tree), this protein is Monoterpene synthase TPS4, chloroplastic.